The following is a 140-amino-acid chain: 6,7-dimethyl-8-ribityllumazine synthase (140 aa).

Residues phenylalanine 11, 43–45, and 67–69 each bind 5-amino-6-(D-ribitylamino)uracil; these read SFD and CVI. Position 72–73 (72–73) interacts with (2S)-2-hydroxy-3-oxobutyl phosphate; that stretch reads DT. Histidine 75 acts as the Proton donor in catalysis. Leucine 100 contributes to the 5-amino-6-(D-ribitylamino)uracil binding site. Arginine 115 lines the (2S)-2-hydroxy-3-oxobutyl phosphate pocket.

It belongs to the DMRL synthase family. As to quaternary structure, forms an icosahedral capsid composed of 60 subunits, arranged as a dodecamer of pentamers.

It carries out the reaction (2S)-2-hydroxy-3-oxobutyl phosphate + 5-amino-6-(D-ribitylamino)uracil = 6,7-dimethyl-8-(1-D-ribityl)lumazine + phosphate + 2 H2O + H(+). It participates in cofactor biosynthesis; riboflavin biosynthesis; riboflavin from 2-hydroxy-3-oxobutyl phosphate and 5-amino-6-(D-ribitylamino)uracil: step 1/2. Catalyzes the formation of 6,7-dimethyl-8-ribityllumazine by condensation of 5-amino-6-(D-ribitylamino)uracil with 3,4-dihydroxy-2-butanone 4-phosphate. This is the penultimate step in the biosynthesis of riboflavin. The protein is 6,7-dimethyl-8-ribityllumazine synthase of Methanococcus vannielii (strain ATCC 35089 / DSM 1224 / JCM 13029 / OCM 148 / SB).